The primary structure comprises 58 residues: ATP synthase F(0) complex subunit k, mitochondrial (58 aa).

An N6-acetyllysine; partial mark is found at Lys-16 and Lys-17. The helical transmembrane segment at 23 to 45 (TLTGRMNCVLATYGSIALIVLYF) threads the bilayer.

Component of the ATP synthase complex composed at least of ATP5F1A/subunit alpha, ATP5F1B/subunit beta, ATP5MC1/subunit c (homooctomer), MT-ATP6/subunit a, MT-ATP8/subunit 8, ATP5ME/subunit e, ATP5MF/subunit f, ATP5MG/subunit g, ATP5MK/subunit k, ATP5MJ/subunit j, ATP5F1C/subunit gamma, ATP5F1D/subunit delta, ATP5F1E/subunit epsilon, ATP5PF/subunit F6, ATP5PB/subunit b, ATP5PD/subunit d, ATP5PO/subunit OSCP. ATP synthase complex consists of a soluble F(1) head domain (subunits alpha(3) and beta(3)) - the catalytic core - and a membrane F(0) domain - the membrane proton channel (subunits c, a, 8, e, f, g, k and j). These two domains are linked by a central stalk (subunits gamma, delta, and epsilon) rotating inside the F1 region and a stationary peripheral stalk (subunits F6, b, d, and OSCP). The ATP synthase complex/complex V exists as a monomeric and a dimeric supercomplex that helps shape mitochondrial cristae to optimize proton flow.

The protein resides in the mitochondrion membrane. In terms of biological role, subunit k, of the mitochondrial membrane ATP synthase complex (F(1)F(0) ATP synthase or Complex V) that produces ATP from ADP in the presence of a proton gradient across the membrane which is generated by electron transport complexes of the respiratory chain. ATP synthase complex consist of a soluble F(1) head domain - the catalytic core - and a membrane F(1) domain - the membrane proton channel. These two domains are linked by a central stalk rotating inside the F(1) region and a stationary peripheral stalk. During catalysis, ATP synthesis in the catalytic domain of F(1) is coupled via a rotary mechanism of the central stalk subunits to proton translocation. In vivo, can only synthesize ATP although its ATP hydrolase activity can be activated artificially in vitro. Part of the complex F(0) domain. Required for dimerization of the ATP synthase complex and as such regulates ATP synthesis in the mitochondria. This is ATP synthase F(0) complex subunit k, mitochondrial from Bos taurus (Bovine).